Reading from the N-terminus, the 280-residue chain is Para-Rep C2 (280 aa).

Residues Met-1 to Pro-97 enclose the CRESS-DNA virus Rep endonuclease domain. Positions Cys-6–Leu-9 match the RCR-1 motif. Residues Glu-37 and His-45 each contribute to the a divalent metal cation site. Positions His-45–Gln-47 match the RCR-2 motif. The short motif at Asn-54–Arg-75 is the Nuclear localization signal element. Tyr-84 acts as the For DNA cleavage activity in catalysis. Residues Tyr-84–Lys-87 carry the RCR-3 motif. Residues Pro-97–Asn-103 carry the Nuclear localization signal motif. Gly-172–Thr-180 is a binding site for ATP.

It belongs to the nanoviridea/circoviridae replication-associated protein family. As to quaternary structure, homooligomer (Potential). Rep binds to repeated DNA motifs (iterons). Requires Mg(2+) as cofactor. Mn(2+) is required as a cofactor.

The protein resides in the host nucleus. The catalysed reaction is ATP + H2O = ADP + phosphate + H(+). In terms of biological role, initiates and terminates the replication only of its own subviral DNA molecule. The closed circular ssDNA genome is first converted to a superhelical dsDNA. Rep binds a specific hairpin at the genome origin of replication. Introduces an endonucleolytic nick within the intergenic region of the genome, thereby initiating the rolling circle replication (RCR). Following cleavage, binds covalently to the 5'-phosphate of DNA as a tyrosyl ester. The cleavage gives rise to a free 3'-OH that serves as a primer for the cellular DNA polymerase. The polymerase synthesizes the (+) strand DNA by rolling circle mechanism. After one round of replication, a Rep-catalyzed nucleotidyl transfer reaction releases a circular single-stranded virus genome, thereby terminating the replication. Displays origin-specific DNA cleavage, nucleotidyl transferase, ATPase and helicase activities. This Subterranean clover stunt C2 alphasatellite (SCSC2A) protein is Para-Rep C2 (C2).